The following is a 486-amino-acid chain: uncharacterized protein (486 aa).

24-35 (IVHLGFGAFHRA) is an NAD(+) binding site.

It belongs to the mannitol dehydrogenase family. UxuB subfamily.

This is an uncharacterized protein from Escherichia coli (strain K12).